A 458-amino-acid polypeptide reads, in one-letter code: Argininosuccinate lyase (458 aa).

Belongs to the lyase 1 family. Argininosuccinate lyase subfamily.

It is found in the cytoplasm. The enzyme catalyses 2-(N(omega)-L-arginino)succinate = fumarate + L-arginine. It participates in amino-acid biosynthesis; L-arginine biosynthesis; L-arginine from L-ornithine and carbamoyl phosphate: step 3/3. This Lachnospira eligens (strain ATCC 27750 / DSM 3376 / VPI C15-48 / C15-B4) (Eubacterium eligens) protein is Argininosuccinate lyase.